The chain runs to 250 residues: MRRRPGIGGLQKAAAARDQYRLLGENVAKLRTDMMKEQLSTFRSQLEEFARKHKNDIRKNPAFRAQFHEMCANIGVDPLASNKGFWAELLGIGDFYYELGVQIIEVCMLTRSHNGGLISLQELCNHLRQRRKKDREAVTEDDCLRAISKLKVLGSGFEVITIGKKKLVRSVPTELNKDHNQILELAQGQGFVIVEEVQRRLSWTSGRVIDALETLLEEGLAMIDNGHKDGKCRYWFPCVSSVYSSIGSDT.

The stretch at 35–55 (MKEQLSTFRSQLEEFARKHKN) forms a coiled coil.

The protein belongs to the SNF8 family. Component of the endosomal sorting complex required for transport II (ESCRT-II), composed of VPS22, VPS25 and VPS36.

It localises to the endosome. Component of the endosomal sorting complex required for transport II (ESCRT-II), which is required for multivesicular body (MVB) formation and sorting of endosomal cargo proteins into MVBs. The ESCRT-II complex is probably involved in the recruitment of the ESCRT-III complex. The polypeptide is Vacuolar protein sorting-associated protein 22 homolog 1 (VP22-1) (Arabidopsis thaliana (Mouse-ear cress)).